A 264-amino-acid chain; its full sequence is Type 1 encapsulin shell protein (264 aa).

This sequence belongs to the encapsulin family. Family 1 subfamily. Forms hollow shells composed of 60 subunits. Monomers probably form pentamers which assemble into the shell. There are 12 pores where the pentamers meet as well as 3-fold axis channels and dimer channels; none are larger than 3-4 Angstroms in diameter. The N-terminus of the protein is inside the shell, the C-terminus is outside.

The protein resides in the encapsulin nanocompartment. Its function is as follows. Shell component of a type 1 encapsulin nanocompartment. Assembles into proteinaceous shells 21-24 nm in diameter. Empty organelles can be expressed in E.coli. Cargo proteins (DypB) are targeted to the interior via their C-terminal extensions. In Rhodococcus erythropolis (strain PR4 / NBRC 100887), this protein is Type 1 encapsulin shell protein.